The chain runs to 286 residues: Spermidine/putrescine transport system permease protein PotB homolog (286 aa).

6 helical membrane-spanning segments follow: residues 10-30 (AVPF…WIIV), 62-82 (LWTA…FCYF), 94-114 (FVIA…LIGL), 136-156 (FGSG…MFLP), 193-213 (TAIL…VAIA), and 248-268 (GAII…IFAP). Residues 58 to 264 (FWTSLWTATV…LITFAFYFVV (207 aa)) form the ABC transmembrane type-1 domain.

Belongs to the binding-protein-dependent transport system permease family. CysTW subfamily.

The protein resides in the cell membrane. Functionally, required for the activity of the bacterial transport system of putrescine and spermidine. The sequence is that of Spermidine/putrescine transport system permease protein PotB homolog (potB) from Mycoplasma pneumoniae (strain ATCC 29342 / M129 / Subtype 1) (Mycoplasmoides pneumoniae).